The primary structure comprises 339 residues: Large ribosomal subunit protein uL10 (339 aa).

The segment at 307-339 (VEEEKKEEKVEEEKEDEEASEEEALAGLSALFG) is disordered. Basic and acidic residues predominate over residues 308–318 (EEEKKEEKVEE). The span at 319 to 330 (EKEDEEASEEEA) shows a compositional bias: acidic residues.

Belongs to the universal ribosomal protein uL10 family. Part of the 50S ribosomal subunit. Forms part of the ribosomal stalk which helps the ribosome interact with GTP-bound translation factors. Forms a heptameric L10(L12)2(L12)2(L12)2 complex, where L10 forms an elongated spine to which the L12 dimers bind in a sequential fashion.

In terms of biological role, forms part of the ribosomal stalk, playing a central role in the interaction of the ribosome with GTP-bound translation factors. This Pyrococcus furiosus (strain ATCC 43587 / DSM 3638 / JCM 8422 / Vc1) protein is Large ribosomal subunit protein uL10.